The primary structure comprises 74 residues: MNTATCFIVLLVVATVIGGIEAGEFDMRKDVMGLFRRAICPGADRPCAACCPCCPGTSCKAESNGVFYCRKDEP.

Positions 1-22 (MNTATCFIVLLVVATVIGGIEA) are cleaved as a signal peptide. The propeptide occupies 23-35 (GEFDMRKDVMGLF). 4 cysteine pairs are disulfide-bonded: cysteine 40-cysteine 54, cysteine 47-cysteine 59, cysteine 50-cysteine 51, and cysteine 53-cysteine 69.

The protein belongs to the neurotoxin 11 (kappa toxin) family. Expressed by the venom gland.

Its subcellular location is the secreted. Functionally, this excitatory toxin inhibits insect calcium-activated potassium (KCa) channels (Slo-type). This chain is Lambda-hexatoxin-Hv1e, found in Hadronyche versuta (Blue mountains funnel-web spider).